We begin with the raw amino-acid sequence, 315 residues long: 2-oxoglutarate and iron-dependent oxygenase domain-containing protein 3 (315 aa).

The segment at 1–31 is disordered; sequence MAPQRRGPPRIPEGSSAAERRRATSTKKDRL. The Cytoplasmic portion of the chain corresponds to 1–41; the sequence is MAPQRRGPPRIPEGSSAAERRRATSTKKDRLPREAQRTWLR. The segment covering 18–31 has biased composition (basic and acidic residues); the sequence is AERRRATSTKKDRL. A helical; Signal-anchor for type II membrane protein transmembrane segment spans residues 42–62; sequence IVAFGVGLALVTCLLWSSVGI. Over 63–315 the chain is Lumenal; sequence DDDVAEVVAR…DHGIEDPVLT (253 aa). One can recognise a Fe2OG dioxygenase domain in the interval 203–305; that stretch reads KPTFFSRINS…AITIAFTCNP (103 aa). Residue asparagine 211 is glycosylated (N-linked (GlcNAc...) asparagine). Fe cation-binding residues include histidine 226 and aspartate 228. Asparagine 263 is a glycosylation site (N-linked (GlcNAc...) asparagine). Histidine 284 lines the Fe cation pocket. The active site involves arginine 294. Position 294 (arginine 294) interacts with 2-oxoglutarate.

The protein belongs to the OGFOD3 family. It depends on Fe(2+) as a cofactor. L-ascorbate serves as cofactor.

The protein resides in the membrane. This is 2-oxoglutarate and iron-dependent oxygenase domain-containing protein 3 (Ogfod3) from Mus musculus (Mouse).